Here is a 292-residue protein sequence, read N- to C-terminus: Malectin (292 aa).

The first 28 residues, 1-28, serve as a signal peptide directing secretion; sequence MLGAWAVEGTAVALLRLLLLLLPPAIRG. Topologically, residues 29–269 are lumenal; it reads PGLGVAGVAG…TPNPYASDNS (241 aa). A carbohydrate is bound by residues Y82, Y104, Y131, F132, and D201. Residues 221–265 are disordered; the sequence is LQPHPGLEKKEEEEEEEEYDEGSNLKKQTNKNRVQSGPRTPNPYA. Positions 231 to 241 are enriched in acidic residues; the sequence is EEEEEEEEYDE. Over residues 245-265 the composition is skewed to polar residues; the sequence is LKKQTNKNRVQSGPRTPNPYA. Residue N268 is glycosylated (N-linked (GlcNAc...) asparagine). A helical transmembrane segment spans residues 270-290; the sequence is SLMFPILVAFGVFIPTLFCLC. Residues 291-292 are Cytoplasmic-facing; the sequence is RL.

This sequence belongs to the malectin family. In terms of assembly, interacts with the oligosaccharyltransferase (OST) complex.

The protein resides in the endoplasmic reticulum membrane. Carbohydrate-binding protein with a strong ligand preference for Glc2-N-glycan. May play a role in the early steps of protein N-glycosylation. This is Malectin from Homo sapiens (Human).